The following is a 22-amino-acid chain: MSIADLKSRLIKASTSKMTAEL.

The protein belongs to the RecA family.

In terms of biological role, important in genetic recombination, DNA repair, and replication. Possesses pairing and strand-transfer activity. Interacts with dda and gene 32 proteins. The chain is Recombination and repair protein (UVSX) from Escherichia coli (Bacteriophage T2).